Reading from the N-terminus, the 77-residue chain is Large ribosomal subunit protein uL29 (77 aa).

Belongs to the universal ribosomal protein uL29 family.

The protein is Large ribosomal subunit protein uL29 of Mycobacterium sp. (strain JLS).